The following is a 365-amino-acid chain: MPAELTFVAPRRTPPPRHLADLDPQERRDAVAELGEKPFRARQLAQHYFGRLEADTARMTDLPAASRERLGEALLPQLLTPVKHVTCDNGMTRKTLWRAFDGVLVESVLMRYPDRVTLCVSSQAGCGMNCPFCATGQAGLTRNLSTAEIVDQVVSSARDLARGTVAGGPGRISNIVFMGMGEPLANYKRVLAAIRRITDPVPDGLGISQRGITVSTVGLVPAIEKLTAERMQVRLAVSLHAPDDELRDELVPVNHRWKVAEVLDAAWRYADTTGRRVSIEYALIRDINDQAWRADLLGRLVAGRLAHVNLIPLNPTPGSKWTASRPEVEREFVRRLRSHGVSVTVRDTRGREIDGACGQLAASGA.

Glutamate 106 serves as the catalytic Proton acceptor. The Radical SAM core domain occupies 112–352; sequence YPDRVTLCVS…VTVRDTRGRE (241 aa). Cysteines 119 and 357 form a disulfide. Cysteine 126, cysteine 130, and cysteine 133 together coordinate [4Fe-4S] cluster. S-adenosyl-L-methionine contacts are provided by residues 181-182, serine 215, 238-240, and asparagine 314; these read GE and SLH. The active-site S-methylcysteine intermediate is the cysteine 357.

Belongs to the radical SAM superfamily. RlmN family. [4Fe-4S] cluster serves as cofactor.

Its subcellular location is the cytoplasm. It carries out the reaction adenosine(2503) in 23S rRNA + 2 reduced [2Fe-2S]-[ferredoxin] + 2 S-adenosyl-L-methionine = 2-methyladenosine(2503) in 23S rRNA + 5'-deoxyadenosine + L-methionine + 2 oxidized [2Fe-2S]-[ferredoxin] + S-adenosyl-L-homocysteine. The catalysed reaction is adenosine(37) in tRNA + 2 reduced [2Fe-2S]-[ferredoxin] + 2 S-adenosyl-L-methionine = 2-methyladenosine(37) in tRNA + 5'-deoxyadenosine + L-methionine + 2 oxidized [2Fe-2S]-[ferredoxin] + S-adenosyl-L-homocysteine. Functionally, specifically methylates position 2 of adenine 2503 in 23S rRNA and position 2 of adenine 37 in tRNAs. The polypeptide is Probable dual-specificity RNA methyltransferase RlmN (Thermobifida fusca (strain YX)).